The following is a 413-amino-acid chain: 3-isopropylmalate dehydratase large subunit (413 aa).

Residues Cys295, Cys353, and Cys356 each coordinate [4Fe-4S] cluster.

The protein belongs to the aconitase/IPM isomerase family. LeuC type 2 subfamily. Heterodimer of LeuC and LeuD. It depends on [4Fe-4S] cluster as a cofactor.

The catalysed reaction is (2R,3S)-3-isopropylmalate = (2S)-2-isopropylmalate. Its pathway is amino-acid biosynthesis; L-leucine biosynthesis; L-leucine from 3-methyl-2-oxobutanoate: step 2/4. Functionally, catalyzes the isomerization between 2-isopropylmalate and 3-isopropylmalate, via the formation of 2-isopropylmaleate. The protein is 3-isopropylmalate dehydratase large subunit of Pyrobaculum calidifontis (strain DSM 21063 / JCM 11548 / VA1).